Here is a 270-residue protein sequence, read N- to C-terminus: Formamidopyrimidine-DNA glycosylase (270 aa).

Pro2 functions as the Schiff-base intermediate with DNA in the catalytic mechanism. Glu3 functions as the Proton donor in the catalytic mechanism. Catalysis depends on Lys58, which acts as the Proton donor; for beta-elimination activity. DNA-binding residues include His91, Arg109, and Arg151. The FPG-type zinc finger occupies 236-270 (MVYNRQEEPCRLCGTPIRQIRQGQRSTYYCPLCQP). The active-site Proton donor; for delta-elimination activity is Arg260.

Belongs to the FPG family. Monomer. Requires Zn(2+) as cofactor.

The catalysed reaction is Hydrolysis of DNA containing ring-opened 7-methylguanine residues, releasing 2,6-diamino-4-hydroxy-5-(N-methyl)formamidopyrimidine.. It catalyses the reaction 2'-deoxyribonucleotide-(2'-deoxyribose 5'-phosphate)-2'-deoxyribonucleotide-DNA = a 3'-end 2'-deoxyribonucleotide-(2,3-dehydro-2,3-deoxyribose 5'-phosphate)-DNA + a 5'-end 5'-phospho-2'-deoxyribonucleoside-DNA + H(+). Functionally, involved in base excision repair of DNA damaged by oxidation or by mutagenic agents. Acts as a DNA glycosylase that recognizes and removes damaged bases. Has a preference for oxidized purines, such as 7,8-dihydro-8-oxoguanine (8-oxoG). Has AP (apurinic/apyrimidinic) lyase activity and introduces nicks in the DNA strand. Cleaves the DNA backbone by beta-delta elimination to generate a single-strand break at the site of the removed base with both 3'- and 5'-phosphates. The protein is Formamidopyrimidine-DNA glycosylase of Chromobacterium violaceum (strain ATCC 12472 / DSM 30191 / JCM 1249 / CCUG 213 / NBRC 12614 / NCIMB 9131 / NCTC 9757 / MK).